We begin with the raw amino-acid sequence, 397 residues long: 8-amino-7-oxononanoate synthase (397 aa).

Arg21 contacts substrate. 110 to 111 is a pyridoxal 5'-phosphate binding site; it reads GY. His135 is a binding site for substrate. Positions 181, 209, and 238 each coordinate pyridoxal 5'-phosphate. N6-(pyridoxal phosphate)lysine is present on Lys241. Substrate is bound at residue Thr355.

This sequence belongs to the class-II pyridoxal-phosphate-dependent aminotransferase family. BioF subfamily. As to quaternary structure, homodimer. Pyridoxal 5'-phosphate serves as cofactor.

The enzyme catalyses 6-carboxyhexanoyl-[ACP] + L-alanine + H(+) = (8S)-8-amino-7-oxononanoate + holo-[ACP] + CO2. It participates in cofactor biosynthesis; biotin biosynthesis. Functionally, catalyzes the decarboxylative condensation of pimeloyl-[acyl-carrier protein] and L-alanine to produce 8-amino-7-oxononanoate (AON), [acyl-carrier protein], and carbon dioxide. This chain is 8-amino-7-oxononanoate synthase, found in Saccharophagus degradans (strain 2-40 / ATCC 43961 / DSM 17024).